Consider the following 287-residue polypeptide: Probable ketose 3-epimerase (287 aa).

The Proton donor/acceptor role is filled by glutamate 152. Residues glutamate 152 and aspartate 185 each coordinate Mn(2+). Histidine 188 serves as a coordination point for substrate. Histidine 211 contributes to the Mn(2+) binding site. Position 217 (arginine 217) interacts with substrate. The active-site Proton donor/acceptor is glutamate 246. Residue glutamate 246 coordinates Mn(2+).

Belongs to the hyi family. Requires Mn(2+) as cofactor.

Its function is as follows. Probably catalyzes the epimerization of ketopentoses and/or ketohexoses at the C3 position. This chain is Probable ketose 3-epimerase, found in Synechocystis sp. (strain ATCC 27184 / PCC 6803 / Kazusa).